We begin with the raw amino-acid sequence, 330 residues long: Phosphate acyltransferase (330 aa).

This sequence belongs to the PlsX family. Homodimer. Probably interacts with PlsY.

It is found in the cytoplasm. The catalysed reaction is a fatty acyl-[ACP] + phosphate = an acyl phosphate + holo-[ACP]. It functions in the pathway lipid metabolism; phospholipid metabolism. In terms of biological role, catalyzes the reversible formation of acyl-phosphate (acyl-PO(4)) from acyl-[acyl-carrier-protein] (acyl-ACP). This enzyme utilizes acyl-ACP as fatty acyl donor, but not acyl-CoA. In Bacillus cytotoxicus (strain DSM 22905 / CIP 110041 / 391-98 / NVH 391-98), this protein is Phosphate acyltransferase.